The chain runs to 447 residues: Phosphoglucosamine mutase (447 aa).

The active-site Phosphoserine intermediate is the serine 107. Positions 107, 246, 248, and 250 each coordinate Mg(2+). Serine 107 bears the Phosphoserine mark.

This sequence belongs to the phosphohexose mutase family. The cofactor is Mg(2+). Activated by phosphorylation.

It catalyses the reaction alpha-D-glucosamine 1-phosphate = D-glucosamine 6-phosphate. In terms of biological role, catalyzes the conversion of glucosamine-6-phosphate to glucosamine-1-phosphate. The chain is Phosphoglucosamine mutase from Ralstonia pickettii (strain 12J).